The sequence spans 119 residues: Translation initiation factor 1A (119 aa).

Residues 1-24 (MSEDDVDNSVKDFESGEENEESIG) are disordered. Residues 24–98 (GRVILPNKKK…EKADVVYRYT (75 aa)) enclose the S1-like domain.

It belongs to the eIF-1A family.

Functionally, seems to be required for maximal rate of protein biosynthesis. Enhances ribosome dissociation into subunits and stabilizes the binding of the initiator Met-tRNA(I) to 40 S ribosomal subunits. This Thermoplasma acidophilum (strain ATCC 25905 / DSM 1728 / JCM 9062 / NBRC 15155 / AMRC-C165) protein is Translation initiation factor 1A (eIF1A).